Reading from the N-terminus, the 542-residue chain is Chaperonin GroEL 2 (542 aa).

Residues 30–33, lysine 51, 87–91, glycine 415, and aspartate 496 each bind ATP; these read TLGP and DGTTT.

The protein belongs to the chaperonin (HSP60) family. In terms of assembly, forms a cylinder of 14 subunits composed of two heptameric rings stacked back-to-back. Interacts with the co-chaperonin GroES.

The protein resides in the cytoplasm. It catalyses the reaction ATP + H2O + a folded polypeptide = ADP + phosphate + an unfolded polypeptide.. Functionally, together with its co-chaperonin GroES, plays an essential role in assisting protein folding. The GroEL-GroES system forms a nano-cage that allows encapsulation of the non-native substrate proteins and provides a physical environment optimized to promote and accelerate protein folding. The polypeptide is Chaperonin GroEL 2 (Rhizobium meliloti (strain 1021) (Ensifer meliloti)).